Reading from the N-terminus, the 207-residue chain is Uridine kinase (207 aa).

11 to 18 (GGSGSGKT) contacts ATP.

This sequence belongs to the uridine kinase family.

The protein resides in the cytoplasm. The catalysed reaction is uridine + ATP = UMP + ADP + H(+). It carries out the reaction cytidine + ATP = CMP + ADP + H(+). It functions in the pathway pyrimidine metabolism; CTP biosynthesis via salvage pathway; CTP from cytidine: step 1/3. It participates in pyrimidine metabolism; UMP biosynthesis via salvage pathway; UMP from uridine: step 1/1. The protein is Uridine kinase of Staphylococcus epidermidis (strain ATCC 35984 / DSM 28319 / BCRC 17069 / CCUG 31568 / BM 3577 / RP62A).